We begin with the raw amino-acid sequence, 445 residues long: uncharacterized protein (445 aa).

His-66 contributes to the Zn(2+) binding site. Catalysis depends on Glu-69, which acts as the Proton acceptor. His-70 and Glu-146 together coordinate Zn(2+). The tract at residues 232 to 251 (GRQSAPPRKSTGRINGGPAL) is disordered.

The protein belongs to the peptidase M16 family. Requires Zn(2+) as cofactor.

This is an uncharacterized protein from Mycobacterium leprae (strain TN).